We begin with the raw amino-acid sequence, 131 residues long: MSGKGGKAGSAAKASQSRSAKAGLTFPVGRVHRLLRKGNYAQRIGSGAPVYMTAVLEYLAAEILELAGNAARDNKKTRIIPRHLQLAIRNDDELNKLLGNVTIAQGGVLPNIHANLLPKKSAKATKASQEL.

Ser-2 carries the N-acetylserine modification. N6-acetyllysine occurs at positions 4 and 7. Gln-105 carries the post-translational modification N5-methylglutamine. Lys-126 participates in a covalent cross-link: Glycyl lysine isopeptide (Lys-Gly) (interchain with G-Cter in SUMO). Ser-128 carries the post-translational modification Phosphoserine. Residues 128-129 (SQ) carry the [ST]-Q motif motif.

This sequence belongs to the histone H2A family. As to quaternary structure, the nucleosome is a histone octamer containing two molecules each of H2A, H2B, H3 and H4 assembled in one H3-H4 heterotetramer and two H2A-H2B heterodimers. The octamer wraps approximately 147 bp of DNA. In terms of processing, phosphorylated to form H2AS128ph (gamma-H2A) in response to DNA double-strand breaks (DSBs) generated by exogenous genotoxic agents and by stalled replication forks. Phosphorylation is dependent on the DNA damage checkpoint kinases MEC1/ATR and TEL1/ATM, spreads on either side of a detected DSB site and may mark the surrounding chromatin for recruitment of proteins required for DNA damage signaling and repair. Gamma-H2A is removed from the DNA prior to the strand invasion-primer extension step of the repair process and subsequently dephosphorylated by PPH3, a component of the histone H2A phosphatase complex (HTP-C). Dephosphorylation is necessary for efficient recovery from the DNA damage checkpoint. Sumoylation on Lys-126 may lead to transcriptional repression. Post-translationally, acetylated by ESA1 to form H2AK4ac and H2AK7ac.

It localises to the nucleus. Its subcellular location is the chromosome. Core component of nucleosome which plays a central role in DNA double strand break (DSB) repair. Nucleosomes wrap and compact DNA into chromatin, limiting DNA accessibility to the cellular machineries which require DNA as a template. Histones thereby play a central role in transcription regulation, DNA repair, DNA replication and chromosomal stability. DNA accessibility is regulated via a complex set of post-translational modifications of histones, also called histone code, and nucleosome remodeling. The protein is Histone H2A.1 (HTA1) of Eremothecium gossypii (strain ATCC 10895 / CBS 109.51 / FGSC 9923 / NRRL Y-1056) (Yeast).